We begin with the raw amino-acid sequence, 59 residues long: Insertion element IS986 uncharacterized 6.6 kDa protein (59 aa).

Residues 1–26 are disordered; sequence MRKWVRQAQVDAGARPGTTTEESAEI.

This sequence belongs to the transposase 8 family.

The chain is Insertion element IS986 uncharacterized 6.6 kDa protein from Mycobacterium tuberculosis.